The chain runs to 99 residues: MARITVEDCLEVVNNRFELVMMASKRARQLANGVQPLIENAAASDKPTVMALREIAARRIDNALIDEVEKAERERAEREALEWAAAEVVADEDMSKNDD.

The protein belongs to the RNA polymerase subunit omega family. The RNAP catalytic core consists of 2 alpha, 1 beta, 1 beta' and 1 omega subunit. When a sigma factor is associated with the core the holoenzyme is formed, which can initiate transcription.

The enzyme catalyses RNA(n) + a ribonucleoside 5'-triphosphate = RNA(n+1) + diphosphate. Promotes RNA polymerase assembly. Latches the N- and C-terminal regions of the beta' subunit thereby facilitating its interaction with the beta and alpha subunits. In Xanthomonas oryzae pv. oryzae (strain MAFF 311018), this protein is DNA-directed RNA polymerase subunit omega.